A 385-amino-acid chain; its full sequence is Leucine aminopeptidase 1 (385 aa).

The signal sequence occupies residues 1 to 20; the sequence is MKFPSLLSLGVAASTTIVAA. Positions 21–87 are excised as a propeptide; it reads VPDQKPIGDI…FPKTFAQTTV (67 aa). Asparagine 177 is a glycosylation site (N-linked (GlcNAc...) asparagine). Zn(2+) is bound by residues histidine 185, aspartate 204, glutamate 243, and aspartate 270. A disulfide bridge connects residues cysteine 319 and cysteine 323. Histidine 352 is a binding site for Zn(2+).

This sequence belongs to the peptidase M28 family. M28E subfamily. In terms of assembly, monomer. Requires Zn(2+) as cofactor.

The protein resides in the secreted. In terms of biological role, extracellular aminopeptidase that allows assimilation of proteinaceous substrates. The polypeptide is Leucine aminopeptidase 1 (LAP1) (Ajellomyces capsulatus (strain G186AR / H82 / ATCC MYA-2454 / RMSCC 2432) (Darling's disease fungus)).